Consider the following 396-residue polypeptide: Protein TOC75-4, chloroplastic (396 aa).

Residues 1 to 23 (MEAVKEAVRKIKSLVIPHADEKD) lie on the Chloroplast intermembrane side of the membrane. A beta stranded transmembrane segment spans residues 24 to 32 (NGIVFEIKL). The Cytoplasmic segment spans residues 33–87 (NETDQRVEKWGLDPSLDFFEVTGNCNLGRPNSEGSNQSLMGSVTIRNIFNPKLDD). A beta stranded transmembrane segment spans residues 88 to 96 (LLSKIEYVR). Residues 97–140 (FLEAVKKPRNRTFKTSFFNSRKLSPVFTGGPGYEDLVPPMFVGR) lie on the Chloroplast intermembrane side of the membrane. Residues 141 to 148 (DCLKATIT) form a beta stranded membrane-spanning segment. Over 149–156 (ENLTRQRE) the chain is Cytoplasmic. A beta stranded transmembrane segment spans residues 157–164 (LTYGVMFE). The Chloroplast intermembrane portion of the chain corresponds to 165-271 (EIITRDENRR…VEEGSDKPQP (107 aa)). Residues 272-280 (PVLVLHGRY) form a beta stranded membrane-spanning segment. The Cytoplasmic segment spans residues 281–292 (GGCIGDLPSYDV). A beta stranded transmembrane segment spans residues 293–301 (FALGGPNSV). Residues 302–363 (RGYSMGELGA…LYRKMGHGSS (62 aa)) are Chloroplast intermembrane-facing. Residues 364–370 (YGLGVKL) traverse the membrane as a beta stranded segment. Residues 371 to 384 (GMVRAEYTVRHNRG) lie on the Cytoplasmic side of the membrane. A beta stranded transmembrane segment spans residues 385-392 (TGALFLRF). The Chloroplast intermembrane segment spans residues 393–396 (GERY).

It belongs to the TOC75 family. Part of the TOC core complex that includes a protein for the specific recognition of transit peptides surrounded by a ring composed of four proteins forming translocation channels, and four to five GTP-binding proteins providing energy. This core complex can interact with components of the TIC complex to form a larger import complex. Chloroplastic protein precursors also interacts with these complexes. Expressed ubiquitously at low levels.

Its subcellular location is the plastid. It is found in the chloroplast outer membrane. Functionally, mediates the insertion of proteins targeted to the outer membrane of chloroplasts. Required for the import of protein precursors into chloroplasts. Forms the voltage-dependent preprotein translocation channels (hydrophilic beta barrel) of the TOC complex in the chloroplastic outer membrane. Required for etioplast formation and/or etioplast-chloroplast transition during deetiolation. This is Protein TOC75-4, chloroplastic (TOC75-4) from Arabidopsis thaliana (Mouse-ear cress).